A 153-amino-acid chain; its full sequence is 6,7-dimethyl-8-ribityllumazine synthase (153 aa).

5-amino-6-(D-ribitylamino)uracil contacts are provided by residues F22, 56–58 (AFE), and 80–82 (AVI). 85–86 (ST) is a binding site for (2S)-2-hydroxy-3-oxobutyl phosphate. H88 (proton donor) is an active-site residue. A 5-amino-6-(D-ribitylamino)uracil-binding site is contributed by F113. R127 contributes to the (2S)-2-hydroxy-3-oxobutyl phosphate binding site.

This sequence belongs to the DMRL synthase family.

The catalysed reaction is (2S)-2-hydroxy-3-oxobutyl phosphate + 5-amino-6-(D-ribitylamino)uracil = 6,7-dimethyl-8-(1-D-ribityl)lumazine + phosphate + 2 H2O + H(+). Its pathway is cofactor biosynthesis; riboflavin biosynthesis; riboflavin from 2-hydroxy-3-oxobutyl phosphate and 5-amino-6-(D-ribitylamino)uracil: step 1/2. Functionally, catalyzes the formation of 6,7-dimethyl-8-ribityllumazine by condensation of 5-amino-6-(D-ribitylamino)uracil with 3,4-dihydroxy-2-butanone 4-phosphate. This is the penultimate step in the biosynthesis of riboflavin. This is 6,7-dimethyl-8-ribityllumazine synthase from Fusobacterium nucleatum subsp. nucleatum (strain ATCC 25586 / DSM 15643 / BCRC 10681 / CIP 101130 / JCM 8532 / KCTC 2640 / LMG 13131 / VPI 4355).